A 961-amino-acid polypeptide reads, in one-letter code: Translation initiation factor IF-2 (961 aa).

A compositionally biased stretch (polar residues) spans 146 to 158; the sequence is PSVPNKTLTTTPH. Residues 146–373 are disordered; the sequence is PSVPNKTLTT…KTTSQVTTQP (228 aa). Basic and acidic residues predominate over residues 163–176; that stretch reads NHSEKDVLESHDSS. The segment covering 177–187 has biased composition (low complexity); that stretch reads NKNIKQSSSQN. The segment covering 230–239 has biased composition (basic and acidic residues); the sequence is SEEKNVDIQQ. Polar residues-rich tracts occupy residues 241–285 and 301–310; these read EIPS…TAPH and YQGQNRNNFI. Residues 355-364 show a composition bias toward basic residues; it reads NRGRKRHKQK. One can recognise a tr-type G domain in the interval 460-627; sequence RRPPVVTIMG…LLALQTDILE (168 aa). Positions 469-476 are G1; the sequence is GHVDHGKT. Residue 469 to 476 coordinates GTP; that stretch reads GHVDHGKT. Residues 494-498 are G2; sequence GITQH. Residues 515-518 are G3; sequence DTPG. GTP contacts are provided by residues 515–519 and 569–572; these read DTPGH and NKMD. The interval 569 to 572 is G4; the sequence is NKMD. A G5 region spans residues 605-607; it reads SAK.

The protein belongs to the TRAFAC class translation factor GTPase superfamily. Classic translation factor GTPase family. IF-2 subfamily.

It is found in the cytoplasm. Functionally, one of the essential components for the initiation of protein synthesis. Protects formylmethionyl-tRNA from spontaneous hydrolysis and promotes its binding to the 30S ribosomal subunits. Also involved in the hydrolysis of GTP during the formation of the 70S ribosomal complex. This chain is Translation initiation factor IF-2, found in Lawsonia intracellularis (strain PHE/MN1-00).